Consider the following 155-residue polypeptide: Endoribonuclease YbeY (155 aa).

His-114, His-118, and His-124 together coordinate Zn(2+).

This sequence belongs to the endoribonuclease YbeY family. The cofactor is Zn(2+).

The protein localises to the cytoplasm. Single strand-specific metallo-endoribonuclease involved in late-stage 70S ribosome quality control and in maturation of the 3' terminus of the 16S rRNA. The protein is Endoribonuclease YbeY of Proteus mirabilis (strain HI4320).